The following is a 464-amino-acid chain: Arginine biosynthesis bifunctional protein ArgJ, mitochondrial (464 aa).

The substrate site is built by Thr191, Lys220, Thr231, Glu318, Asn459, and Thr464. The active-site Nucleophile is Thr231.

The protein belongs to the ArgJ family. In terms of assembly, heterodimer of an alpha and a beta chain. In terms of processing, the alpha and beta chains are autoproteolytically processed from a single precursor protein within the mitochondrion.

Its subcellular location is the mitochondrion matrix. It catalyses the reaction N(2)-acetyl-L-ornithine + L-glutamate = N-acetyl-L-glutamate + L-ornithine. It carries out the reaction L-glutamate + acetyl-CoA = N-acetyl-L-glutamate + CoA + H(+). The protein operates within amino-acid biosynthesis; L-arginine biosynthesis; L-ornithine and N-acetyl-L-glutamate from L-glutamate and N(2)-acetyl-L-ornithine (cyclic): step 1/1. It functions in the pathway amino-acid biosynthesis; L-arginine biosynthesis; N(2)-acetyl-L-ornithine from L-glutamate: step 1/4. Functionally, catalyzes two activities which are involved in the cyclic version of arginine biosynthesis: the synthesis of acetylglutamate from glutamate and acetyl-CoA, and of ornithine by transacetylation between acetylornithine and glutamate. The chain is Arginine biosynthesis bifunctional protein ArgJ, mitochondrial from Pyricularia oryzae (strain 70-15 / ATCC MYA-4617 / FGSC 8958) (Rice blast fungus).